The primary structure comprises 232 residues: Protein FAM246B (232 aa).

A compositionally biased stretch (basic and acidic residues) spans 19–31 (EVLRRVTGRRRDP). Disordered stretches follow at residues 19–47 (EVLR…RAPG), 80–101 (AAGA…VCGE), 151–179 (ALLP…GPTL), and 191–232 (AASR…GGGD). A compositionally biased stretch (basic residues) spans 211 to 220 (APARKNHKKM).

This sequence belongs to the FAM246 family.

This chain is Protein FAM246B, found in Homo sapiens (Human).